The chain runs to 902 residues: DNA mismatch repair protein MutS (902 aa).

An ATP-binding site is contributed by 654 to 661 (GPNMGGKS).

Belongs to the DNA mismatch repair MutS family.

This protein is involved in the repair of mismatches in DNA. It is possible that it carries out the mismatch recognition step. This protein has a weak ATPase activity. This is DNA mismatch repair protein MutS from Xanthomonas axonopodis pv. citri (strain 306).